Reading from the N-terminus, the 207-residue chain is Heat shock protein beta-1 (207 aa).

The residue at position 12 (R12) is an Omega-N-methylarginine. Residue S13 is modified to Phosphoserine. S15 is subject to Phosphoserine; by MAPKAPK2 and MAPKAPK3. S27 is modified (phosphoserine). An interaction with TGFB1I1 region spans residues 72 to 207; it reads APAYSRLLSR…AGKSEKPGTK (136 aa). A sHSP domain is found at 78-186; that stretch reads LLSRQLSSGV…QSAEITIPVT (109 aa). A phosphoserine; by MAPKAPK2, MAPKAPK3 and MAPKAPK5 mark is found at S80 and S84. Residues S85, S88, and S100 each carry the phosphoserine modification. K125 carries the N6-acetyllysine modification. The segment at 151-181 is disordered; the sequence is DPTQVSSSLSPEGTLSVEAPLPKPATQSAEI. Residues 153-163 are compositionally biased toward polar residues; it reads TQVSSSLSPEG. T176 carries the phosphothreonine modification. Phosphoserine is present on residues S178 and S201.

This sequence belongs to the small heat shock protein (HSP20) family. Homooligomer. Homodimer; becomes monomeric upon activation. Heterooligomer; with HSPB6. Associates with alpha- and beta-tubulin. Interacts with TGFB1I1. Interacts with CRYAB. Interacts with HSPB8. Interacts with HSPBAP1. Phosphorylated upon exposure to protein kinase C activators and heat shock. Phosphorylation by MAPKAPK2 and MAPKAPK3 in response to stress dissociates HSPB1 from large small heat-shock protein (sHsps) oligomers and impairs its chaperone activity and ability to protect against oxidative stress effectively. Phosphorylation by MAPKAPK5 in response to PKA stimulation induces F-actin rearrangement.

The protein localises to the cytoplasm. It localises to the nucleus. The protein resides in the cytoskeleton. It is found in the spindle. In terms of biological role, small heat shock protein which functions as a molecular chaperone probably maintaining denatured proteins in a folding-competent state. Plays a role in stress resistance and actin organization. Through its molecular chaperone activity may regulate numerous biological processes including the phosphorylation and the axonal transport of neurofilament proteins. The chain is Heat shock protein beta-1 (HSPB1) from Sus scrofa (Pig).